A 564-amino-acid polypeptide reads, in one-letter code: Pyruvate decarboxylase (564 aa).

Pyruvate contacts are provided by D28 and H115. Thiamine diphosphate-binding positions include T390 and 413 to 415; that span reads GSI. A Mg(2+)-binding site is contributed by D444. Thiamine diphosphate contacts are provided by residues 445 to 446 and 471 to 476; these read GS and NNGYTI. Residues N471 and G473 each coordinate Mg(2+). E477 is a pyruvate binding site.

Belongs to the TPP enzyme family. In terms of assembly, homotetramer. Requires Mg(2+) as cofactor. It depends on thiamine diphosphate as a cofactor.

It catalyses the reaction a 2-oxocarboxylate + H(+) = an aldehyde + CO2. The enzyme catalyses pyruvate + H(+) = acetaldehyde + CO2. The chain is Pyruvate decarboxylase (PDC) from Hanseniaspora uvarum (Yeast).